The chain runs to 61 residues: Large ribosomal subunit protein uL30 (61 aa).

It belongs to the universal ribosomal protein uL30 family. As to quaternary structure, part of the 50S ribosomal subunit.

This chain is Large ribosomal subunit protein uL30, found in Exiguobacterium sp. (strain ATCC BAA-1283 / AT1b).